Consider the following 250-residue polypeptide: Anti-Pycsar protein Apyc1 (250 aa).

The beta-lactamase-like stretch occupies residues 19-220 (YNNNALVKCN…AVQEMIMLMH (202 aa)). Zn(2+) contacts are provided by H61, H63, D65, H66, H146, D166, and H220.

The protein belongs to the anti-Pycsar protein Apyc1 family. Homodimer. Zn(2+) serves as cofactor.

The catalysed reaction is 3',5'-cyclic CMP + H2O = CMP + H(+). It catalyses the reaction 3',5'-cyclic UMP + H2O = UMP + H(+). In terms of biological role, counteracts the endogenous Pycsar antiviral defense system. Phosphodiesterase that enables metal-dependent hydrolysis of host cyclic nucleotide Pycsar defense signals such as cCMP and cUMP. In Paenibacillus xerothermodurans, this protein is Anti-Pycsar protein Apyc1.